Reading from the N-terminus, the 260-residue chain is 3'-5' ssDNA/RNA exonuclease TatD (260 aa).

A divalent metal cation is bound by residues glutamate 91, histidine 127, and histidine 152.

Belongs to the metallo-dependent hydrolases superfamily. TatD-type hydrolase family. TatD subfamily. As to quaternary structure, monomer. Requires Mg(2+) as cofactor.

The protein resides in the cytoplasm. Its function is as follows. 3'-5' exonuclease that prefers single-stranded DNA and RNA. May play a role in the H(2)O(2)-induced DNA damage repair. The sequence is that of 3'-5' ssDNA/RNA exonuclease TatD from Escherichia fergusonii (strain ATCC 35469 / DSM 13698 / CCUG 18766 / IAM 14443 / JCM 21226 / LMG 7866 / NBRC 102419 / NCTC 12128 / CDC 0568-73).